Consider the following 124-residue polypeptide: Small ribosomal subunit protein uS13 (124 aa).

The interval 98-124 is disordered; it reads VRGQRTRCNARTRKGPRKTVGAKRKEK.

This sequence belongs to the universal ribosomal protein uS13 family. In terms of assembly, part of the 30S ribosomal subunit. Forms a loose heterodimer with protein S19. Forms two bridges to the 50S subunit in the 70S ribosome.

In terms of biological role, located at the top of the head of the 30S subunit, it contacts several helices of the 16S rRNA. In the 70S ribosome it contacts the 23S rRNA (bridge B1a) and protein L5 of the 50S subunit (bridge B1b), connecting the 2 subunits; these bridges are implicated in subunit movement. Contacts the tRNAs in the A and P-sites. In Dictyoglomus thermophilum (strain ATCC 35947 / DSM 3960 / H-6-12), this protein is Small ribosomal subunit protein uS13.